The sequence spans 142 residues: Large ribosomal subunit protein bL17 (142 aa).

This sequence belongs to the bacterial ribosomal protein bL17 family. Part of the 50S ribosomal subunit. Contacts protein L32.

The polypeptide is Large ribosomal subunit protein bL17 (Protochlamydia amoebophila (strain UWE25)).